The chain runs to 416 residues: Adenylosuccinate synthetase (416 aa).

GTP-binding positions include 12–18 (GDEGKGK) and 40–42 (GHT). Catalysis depends on Asp-13, which acts as the Proton acceptor. Residues Asp-13 and Gly-40 each contribute to the Mg(2+) site. Residues 13-16 (DEGK), 38-41 (NAGH), Thr-125, Arg-139, Gln-219, Thr-234, and Arg-298 contribute to the IMP site. His-41 serves as the catalytic Proton donor. A substrate-binding site is contributed by 294-300 (TVTGRKR). Residues Arg-300, 326 to 328 (KLD), and 404 to 406 (STS) each bind GTP.

The protein belongs to the adenylosuccinate synthetase family. Homodimer. Mg(2+) serves as cofactor.

The protein resides in the cytoplasm. The enzyme catalyses IMP + L-aspartate + GTP = N(6)-(1,2-dicarboxyethyl)-AMP + GDP + phosphate + 2 H(+). Its pathway is purine metabolism; AMP biosynthesis via de novo pathway; AMP from IMP: step 1/2. Plays an important role in the de novo pathway of purine nucleotide biosynthesis. Catalyzes the first committed step in the biosynthesis of AMP from IMP. This is Adenylosuccinate synthetase from Aliarcobacter butzleri (strain RM4018) (Arcobacter butzleri).